Consider the following 507-residue polypeptide: Fluoroacetaldehyde dehydrogenase (507 aa).

219–225 lines the NAD(+) pocket; that stretch reads GFGIEAG. Active-site residues include Glu263 and Cys302.

It belongs to the aldehyde dehydrogenase family. In terms of assembly, homotetramer.

The enzyme catalyses fluoroacetaldehyde + NAD(+) + H2O = fluoroacetate + NADH + 2 H(+). Functionally, catalyzes the oxidation of fluoroacetaldehyde to fluoroacetate. Has high affinity for fluoroacetate and glycolaldehyde but not for acetaldehyde. The polypeptide is Fluoroacetaldehyde dehydrogenase (Streptantibioticus cattleyicolor (strain ATCC 35852 / DSM 46488 / JCM 4925 / NBRC 14057 / NRRL 8057) (Streptomyces cattleya)).